Reading from the N-terminus, the 264-residue chain is tRNA pseudouridine synthase A (264 aa).

Asp-51 functions as the Nucleophile in the catalytic mechanism. Position 109 (Tyr-109) interacts with substrate.

Belongs to the tRNA pseudouridine synthase TruA family. In terms of assembly, homodimer.

It catalyses the reaction uridine(38/39/40) in tRNA = pseudouridine(38/39/40) in tRNA. Its function is as follows. Formation of pseudouridine at positions 38, 39 and 40 in the anticodon stem and loop of transfer RNAs. The polypeptide is tRNA pseudouridine synthase A (Photorhabdus laumondii subsp. laumondii (strain DSM 15139 / CIP 105565 / TT01) (Photorhabdus luminescens subsp. laumondii)).